Reading from the N-terminus, the 461-residue chain is E3 ubiquitin-protein ligase TRIM15 (461 aa).

Residues 12–57 (CSDCQGRLEDAVTAACGHTFCRLCLPLPPQMGAQPSSRVLLCPVCQ) form an RING-type zinc finger. The B box-type zinc finger occupies 74 to 115 (LGETYCEEHGEKIYFFCENDAEFLCVFCREGPSHQAHAVGFL). 4 residues coordinate Zn(2+): Cys-79, His-82, Cys-101, and His-107. A coiled-coil region spans residues 123-230 (RDRLRGRLEA…EKCQQPASEL (108 aa)). Positions 272–461 (EMLRAFSENL…KKGSCLTLKG (190 aa)) constitute a B30.2/SPRY domain.

It belongs to the TRIM/RBCC family. Interacts with paxillin/PXN; this interaction recruits TRIM15 to focal adhesions. Interacts with TRIM8; this interaction prevents TRIM8 cytoplasmic translocation.

Its subcellular location is the cytoplasm. It localises to the nucleus. It is found in the cell junction. The protein localises to the focal adhesion. It catalyses the reaction S-ubiquitinyl-[E2 ubiquitin-conjugating enzyme]-L-cysteine + [acceptor protein]-L-lysine = [E2 ubiquitin-conjugating enzyme]-L-cysteine + N(6)-ubiquitinyl-[acceptor protein]-L-lysine.. Its function is as follows. E3 ubiquitin ligase that plays a role in several processes including innate antiviral immnity, cell migration and chemotaxis. Acts as a 'Lys-63'-specific ubiquitin ligase for MAPK1/ERK2 and MAPK3/ERK1, promoting their activation by facilitating their interaction with MAP2K1 and MAP2K2. Also plays a role in cell migration and chemotaxis by acting as a stable focal adhesion component upon recruitment by multi-adapter protein paxillin/PXN. Functions in the RIGI-mediated interferon induction pathway upstream or at the level of MAVS. Inhibits NF-kappa-B activation by turnover of 'Lys-63'-linked ubiquitination of MAP3K7/TAK1. Mechanistically, prevents TRIM8 cytoplasmic translocation and thus inhibits TRIM8-mediated 'Lys-63'-linked polyubiquitination of MAP3K7/TAK1 in the cytoplasm. Also has an important regulatory effect on the activation of hepatic stellate cells (HSCs). This Sus scrofa (Pig) protein is E3 ubiquitin-protein ligase TRIM15 (TRIM15).